The following is an 813-amino-acid chain: Lon protease (813 aa).

One can recognise a Lon N-terminal domain in the interval 14–207; it reads LPLLPLRGII…ILTEILAREM (194 aa). 359–366 provides a ligand contact to ATP; the sequence is GPPGVGKT. In terms of domain architecture, Lon proteolytic spans 595–776; sequence ESQVGVATGL…DQVIREALLE (182 aa). Active-site residues include S682 and K725.

This sequence belongs to the peptidase S16 family. In terms of assembly, homohexamer. Organized in a ring with a central cavity.

It localises to the cytoplasm. It carries out the reaction Hydrolysis of proteins in presence of ATP.. ATP-dependent serine protease that mediates the selective degradation of mutant and abnormal proteins as well as certain short-lived regulatory proteins. Required for cellular homeostasis and for survival from DNA damage and developmental changes induced by stress. Degrades polypeptides processively to yield small peptide fragments that are 5 to 10 amino acids long. Binds to DNA in a double-stranded, site-specific manner. This Heliobacterium modesticaldum (strain ATCC 51547 / Ice1) protein is Lon protease.